Here is a 393-residue protein sequence, read N- to C-terminus: Probable alpha-1,6-mannosyltransferase MNN10 (393 aa).

The Cytoplasmic segment spans residues 1 to 52; that stretch reads MSSVPYNSQLPISNHLEYDEDEKKSRGSKLGLKYKMIYWRKTLCSSLARWRK. Residues 53 to 73 form a helical; Signal-anchor for type II membrane protein membrane-spanning segment; the sequence is LILLISLALFLFIWISDSTIS. Residues 74-393 are Lumenal-facing; that stretch reads RNPSTTSFQG…RKWYTRFFFP (320 aa). Residues 77–97 form a disordered region; it reads STTSFQGQNSNDNKLSNTGSS.

Belongs to the glycosyltransferase 34 family. In terms of assembly, component of the M-Pol II complex composed of ANP1, MNN9, MNN10, MNN11 and HOC1.

It localises to the endoplasmic reticulum membrane. It is found in the golgi apparatus. The protein localises to the cis-Golgi network membrane. Its function is as follows. Required for polarized growth and efficient budding. The M-Pol II complex possesses alpha-1,6-mannosyltransferase activity and is probably involved in the elongation of the mannan backbone of N-linked glycans on cell wall and periplasmic proteins. This chain is Probable alpha-1,6-mannosyltransferase MNN10 (MNN10), found in Saccharomyces cerevisiae (strain ATCC 204508 / S288c) (Baker's yeast).